A 123-amino-acid polypeptide reads, in one-letter code: Ribosome-binding factor A (123 aa).

The protein belongs to the RbfA family. As to quaternary structure, monomer. Binds 30S ribosomal subunits, but not 50S ribosomal subunits or 70S ribosomes.

Its subcellular location is the cytoplasm. One of several proteins that assist in the late maturation steps of the functional core of the 30S ribosomal subunit. Associates with free 30S ribosomal subunits (but not with 30S subunits that are part of 70S ribosomes or polysomes). Required for efficient processing of 16S rRNA. May interact with the 5'-terminal helix region of 16S rRNA. This chain is Ribosome-binding factor A, found in Ralstonia pickettii (strain 12J).